The following is an 870-amino-acid chain: Eukaryotic translation initiation factor 3 subunit C (870 aa).

The interval 1–92 is disordered; the sequence is MSRFFRGDSS…GVKVVKSAKN (92 aa). The span at 14 to 54 shows a compositional bias: acidic residues; sequence SSDEEEDLYSDDEEVQEQPEEESEEDDSEEDDDDDDSDSSS. The 175-residue stretch at 608–782 folds into the PCI domain; that stretch reads FHMHINLELL…SSIIFRKGVE (175 aa). Residues 807–870 are disordered; sequence TLETRTQGTA…ALGAAVGSRA (64 aa). Gly residues predominate over residues 824 to 844; it reads GRGGRGGNRGGRGGNRGGRGG.

This sequence belongs to the eIF-3 subunit C family. Component of the eukaryotic translation initiation factor 3 (eIF-3) complex.

It localises to the cytoplasm. Component of the eukaryotic translation initiation factor 3 (eIF-3) complex, which is involved in protein synthesis of a specialized repertoire of mRNAs and, together with other initiation factors, stimulates binding of mRNA and methionyl-tRNAi to the 40S ribosome. The eIF-3 complex specifically targets and initiates translation of a subset of mRNAs involved in cell proliferation. The protein is Eukaryotic translation initiation factor 3 subunit C (nip1) of Sclerotinia sclerotiorum (strain ATCC 18683 / 1980 / Ss-1) (White mold).